A 388-amino-acid chain; its full sequence is Homeobox protein XHOX-3 (388 aa).

Disordered stretches follow at residues 30–109 and 131–163; these read AVGS…SDFY and SAGQ…FSAC. 2 stretches are compositionally biased toward polar residues: residues 68–81 and 91–103; these read ATGQ…QLRI and DSLS…SSSD. A DNA-binding region (homeobox) is located at residues 168-227; the sequence is MRRYRTAFTREQIARLEKEFYRENYVSRPRRCELAAALNLPETTIKVWFQNRRMKDKRQR.

It belongs to the even-skipped homeobox family.

It localises to the nucleus. Its function is as follows. May be required for posterior development and development of normal embryonic axial pattern. The sequence is that of Homeobox protein XHOX-3 (xhox3) from Xenopus laevis (African clawed frog).